Consider the following 154-residue polypeptide: MRCPTCQYNGTRVVDSRPADDGNSIRRRRECEKCGFRFTTFEKVEESPLIVVKKDGAREEFAREKVRRGLIRACEKRPVSAEQIEEIVNEVERELRNIGDSEIASDLIGEKVMNKLANLDEVAYVRFASVYRQFKDISVFVEELKDLMEKNKDR.

A zinc finger lies at Cys-3–Cys-34. One can recognise an ATP-cone domain in the interval Leu-49–Val-139.

This sequence belongs to the NrdR family. Zn(2+) is required as a cofactor.

Its function is as follows. Negatively regulates transcription of bacterial ribonucleotide reductase nrd genes and operons by binding to NrdR-boxes. The sequence is that of Transcriptional repressor NrdR from Listeria monocytogenes serotype 4a (strain HCC23).